A 125-amino-acid chain; its full sequence is Large ribosomal subunit protein bL12 (125 aa).

It belongs to the bacterial ribosomal protein bL12 family. As to quaternary structure, homodimer. Part of the ribosomal stalk of the 50S ribosomal subunit. Forms a multimeric L10(L12)X complex, where L10 forms an elongated spine to which 2 to 4 L12 dimers bind in a sequential fashion. Binds GTP-bound translation factors.

Functionally, forms part of the ribosomal stalk which helps the ribosome interact with GTP-bound translation factors. Is thus essential for accurate translation. This is Large ribosomal subunit protein bL12 from Ruegeria sp. (strain TM1040) (Silicibacter sp.).